A 708-amino-acid polypeptide reads, in one-letter code: Capsid scaffolding protein (708 aa).

Residues histidine 63, serine 132, and histidine 157 each act as charge relay system in the active site. 3 disordered regions span residues 269–339 (ASAE…MSHP), 455–565 (HPSY…QQQR), and 593–619 (ALPS…SGGG). Residues 284 to 293 (PAAGARVPSS) show a composition bias toward low complexity. Residues 294–311 (SPSPPVEPPSPVQPPALP) show a composition bias toward pro residues. Low complexity predominate over residues 326–339 (SPSEPAEAASMSHP). The interval 333-352 (AASMSHPLSAAVPAATAPPG) is interaction with pAP. Residues 498–513 (KQHRHGGSGGHNKRRK) show a composition bias toward basic residues. Short sequence motifs (nuclear localization signal) lie at residues 510-515 (KRRKET) and 537-543 (RARKRLK). Positions 593–611 (ALPSAASSSPTTTTVCTPT) are enriched in low complexity. The interval 688–708 (PPKDMVDLNRRIFVAALNKLE) is interaction with major capsid protein.

The protein belongs to the herpesviridae capsid scaffolding protein family. In terms of assembly, homomultimer. Interacts with major capsid protein. As to quaternary structure, exists in a monomer-dimer equilibrium with the dimer being the active species. In terms of processing, capsid scaffolding protein is cleaved by assemblin after formation of the spherical procapsid. As a result, the capsid obtains its mature, icosahedral shape. Cleavages occur at two or more sites: release (R-site) and maturation (M-site).

The protein localises to the host cytoplasm. Its subcellular location is the host nucleus. It catalyses the reaction Cleaves -Ala-|-Ser- and -Ala-|-Ala- bonds in the scaffold protein.. Acts as a scaffold protein by binding major capsid protein in the cytoplasm, inducing the nuclear localization of both proteins. Multimerizes in the nucleus such as major capsid protein forms the icosahedral T=16 capsid. Autocatalytic cleavage releases the assembly protein, and subsequently abolishes interaction with major capsid protein. Cleavages products are evicted from the capsid before or during DNA packaging. Its function is as follows. Protease that plays an essential role in virion assembly within the nucleus. Catalyzes the cleavage of the assembly protein after formation of the spherical procapsid. By that cleavage, the capsid matures and gains its icosahedral shape. The cleavage sites seem to include -Ala-Ser-, -Ala-Ala-, as well as Ala-Thr bonds. Assemblin and cleavages products are evicted from the capsid before or during DNA packaging. Functionally, plays a major role in capsid assembly. Acts as a scaffold protein by binding major capsid protein. Multimerizes in the nucleus such as major capsid protein forms the icosahedral T=16 capsid. Cleaved by assemblin after capsid completion. The cleavages products are evicted from the capsid before or during DNA packaging. The chain is Capsid scaffolding protein (UL80) from Homo sapiens (Human).